Here is a 139-residue protein sequence, read N- to C-terminus: Hydrogenase maturation factor HypA (139 aa).

His2 contributes to the Ni(2+) binding site. Zn(2+)-binding residues include Cys73, Cys76, Cys110, and Cys113.

This sequence belongs to the HypA/HybF family.

Its function is as follows. Involved in the maturation of [NiFe] hydrogenases. Required for nickel insertion into the metal center of the hydrogenase. This chain is Hydrogenase maturation factor HypA, found in Thermococcus gammatolerans (strain DSM 15229 / JCM 11827 / EJ3).